A 118-amino-acid chain; its full sequence is Basic leucine zipper transcriptional factor ATF-like 3 (118 aa).

Positions 1-69 (MSQGPPAVSV…HESLEQENSV (69 aa)) are disordered. 2 positions are modified to phosphoserine: serine 2 and serine 24. Positions 28 to 91 (DDRKVRRREK…RHLSEVLKEH (64 aa)) constitute a bZIP domain. The basic motif stretch occupies residues 30–55 (RKVRRREKNRVAAQRSRKKQTQKADK). A compositionally biased stretch (basic and acidic residues) spans 51–69 (QKADKLHEEHESLEQENSV). Residues 56 to 84 (LHEEHESLEQENSVLRREISKLKEELRHL) form a leucine-zipper region.

Belongs to the bZIP family. In terms of assembly, heterodimer; heterodimerizes with JUN family proteins. Interacts with JUN. In terms of tissue distribution, highly expressed in CD8-alpha(+) classical dendritic cells (cDCs), with low to absent expression in other immune cells and non-immune tissues.

The protein resides in the nucleus. Its function is as follows. AP-1 family transcription factor that controls the differentiation of CD8(+) thymic conventional dendritic cells in the immune system. Acts via the formation of a heterodimer with JUN family proteins that recognizes and binds DNA sequence 5'-TGA[CG]TCA-3' and regulates expression of target genes. Required for development of CD8-alpha(+) classical dendritic cells (cDCs) and related CD103(+) dendritic cells that cross-present antigens to CD8 T-cells and produce interleukin-12 (IL12) in response to pathogens. This chain is Basic leucine zipper transcriptional factor ATF-like 3 (Batf3), found in Mus musculus (Mouse).